A 409-amino-acid polypeptide reads, in one-letter code: Argininosuccinate synthase (409 aa).

Residues 10-18 and alanine 37 each bind ATP; that span reads AYSGGLDTS. Tyrosine 90 and serine 95 together coordinate L-citrulline. Glycine 120 lines the ATP pocket. The L-aspartate site is built by threonine 122, asparagine 126, and aspartate 127. Asparagine 126 lines the L-citrulline pocket. Residues arginine 130, serine 182, serine 191, glutamate 267, and tyrosine 279 each coordinate L-citrulline.

It belongs to the argininosuccinate synthase family. Type 1 subfamily. Homotetramer.

The protein resides in the cytoplasm. It catalyses the reaction L-citrulline + L-aspartate + ATP = 2-(N(omega)-L-arginino)succinate + AMP + diphosphate + H(+). It participates in amino-acid biosynthesis; L-arginine biosynthesis; L-arginine from L-ornithine and carbamoyl phosphate: step 2/3. The protein is Argininosuccinate synthase of Aromatoleum aromaticum (strain DSM 19018 / LMG 30748 / EbN1) (Azoarcus sp. (strain EbN1)).